The following is a 487-amino-acid chain: Acetylcholine receptor subunit beta-type acr-3 (487 aa).

Positions 1-20 (MQKIWLFSIITIFLITELQC) are cleaved as a signal peptide. Residues 21-231 (YPNSAEERLL…KIRRKALFYT (211 aa)) lie on the Extracellular side of the membrane. N-linked (GlcNAc...) asparagine glycosylation occurs at Asn-46. Cysteines 151 and 165 form a disulfide. 3 helical membrane-spanning segments follow: residues 232–252 (VILIMPTVLMAFLSMMVFYLP), 259–279 (ITLAISILLALVVFLLVVSKI), and 294–314 (LLMTFIMNMITIMVSVIIINV). Topologically, residues 315–439 (YFRGPATHIM…WKFVSVVIDR (125 aa)) are cytoplasmic. The tract at residues 380-400 (ISEQPKQTSRKDGSSSEEKLS) is disordered. A helical transmembrane segment spans residues 440–460 (LLLYLFFAVTTGGTVGILLSA).

The protein belongs to the ligand-gated ion channel (TC 1.A.9) family. Acetylcholine receptor (TC 1.A.9.1) subfamily. Component of nicotinic acetylcholine receptor. In cholinergic motoneurons, composed of 2 non-alpha subunits acr-2 and acr-3, and 3 alpha subunits unc-38, unc-63 and acr-12.

Its subcellular location is the postsynaptic cell membrane. The protein resides in the cell membrane. In terms of biological role, non-alpha subunit of nicotinic acetylcholine receptor (nAChR). Probably acts in cholinergic motoneurons to regulate presynaptic neurotransmitter release, thereby ensuring normal level of excitation of cholinergic motoneurons during locomotion. The chain is Acetylcholine receptor subunit beta-type acr-3 (acr-3) from Caenorhabditis elegans.